We begin with the raw amino-acid sequence, 539 residues long: Chloride channel CLIC-like protein 1 (539 aa).

The first 18 residues, Met-1–Ala-18, serve as a signal peptide directing secretion. At His-19–Asn-184 the chain is on the lumenal side. Residues Lys-41–Ala-61 form a disordered region. Residues Val-185 to Thr-205 traverse the membrane as a helical segment. Residues Tyr-206 to Arg-215 are Cytoplasmic-facing. Residues Ile-216–Ala-236 form a helical membrane-spanning segment. The Lumenal segment spans residues Phe-237–Glu-329. Residues Ile-330–Cys-350 traverse the membrane as a helical segment. Residues Tyr-351–Gly-539 are Cytoplasmic-facing. Residues Arg-361–Gly-410 form a disordered region. Over residues Gly-364–Leu-389 the composition is skewed to basic and acidic residues. Phosphoserine is present on residues Ser-429, Ser-433, and Ser-459. The segment at Asp-444–Gly-539 is disordered. A compositionally biased stretch (polar residues) spans Ser-475–Lys-485. Residue Thr-476 is modified to Phosphothreonine. A phosphoserine mark is found at Ser-498, Ser-513, and Ser-521. Residues Cys-512–Ser-521 are compositionally biased toward low complexity.

The protein belongs to the chloride channel MCLC family. Homomultimers. Interacts with mitochondrial protein PIGBOS1 (via C-terminus); the interaction occurs at the mitochondria-associated endoplasmic reticulum (ER) membrane, a zone of contact between the ER and mitochondrial membranes, but does not appear to play a role in ER-mitochondria tethering and is not affected by ER stress. Interacts with CALR. As to expression, expressed in cerebellum (at protein level).

Its subcellular location is the endoplasmic reticulum membrane. It carries out the reaction chloride(in) = chloride(out). It catalyses the reaction bromide(in) = bromide(out). The catalysed reaction is nitrate(in) = nitrate(out). The enzyme catalyses fluoride(in) = fluoride(out). With respect to regulation, activated by membrane phosphatidylinositol 4,5-bisphosphate (PI(4,5)P2, PIP2). Inhibited by lumenal Ca(2+). Anion-selective channel with Ca(2+)-dependent and voltage-independent gating. Permeable to small monovalent anions with selectivity for bromide &gt; chloride &gt; nitrate &gt; fluoride. Operates in the endoplasmic reticulum (ER) membrane where it mediates chloride efflux to compensate for the loss of positive charges from the ER lumen upon Ca(2+) release. Contributes to the maintenance of ER Ca(2+) pools and activation of unfolded protein response to prevent accumulation of misfolded proteins in the ER lumen. Particularly involved in ER homeostasis mechanisms underlying motor neurons and retinal photoreceptors survival. This chain is Chloride channel CLIC-like protein 1, found in Mus musculus (Mouse).